We begin with the raw amino-acid sequence, 408 residues long: Centromere protein U (408 aa).

Basic residues predominate over residues 1–33 (DRPRPARLSHARFSKNHSGRTHSMKDKAGRKHR). The disordered stretch occupies residues 1-218 (DRPRPARLSH…GKRKKPRSYT (218 aa)). Phosphothreonine; by PLK1 is present on T72. At T92 the chain carries Phosphothreonine. A compositionally biased stretch (basic and acidic residues) spans 94–103 (QEKEAKRSSD). S102 carries the post-translational modification Phosphoserine. T104 is subject to Phosphothreonine. 3 positions are modified to phosphoserine: S105, S110, and S114. Positions 118–127 (SAKKPRRKLK) are enriched in basic residues. Phosphoserine is present on residues S130, S133, and S135. Over residues 176-186 (PQKTGPQSAES) the composition is skewed to polar residues. K178 participates in a covalent cross-link: Glycyl lysine isopeptide (Lys-Gly) (interchain with G-Cter in SUMO2). 2 positions are modified to phosphoserine: S183 and S187. T192 is subject to Phosphothreonine. The residue at position 222 (S222) is a Phosphoserine. A coiled-coil region spans residues 273–350 (SNLKEELIKM…LRKAAYFLSN (78 aa)). The Nuclear localization signal motif lies at 293 to 310 (KRKNAKIISNIEKKRQRL).

This sequence belongs to the CENP-U/AME1 family. In terms of assembly, component of the CENPA-NAC complex, at least composed of CENPA, CENPC, CENPH, CENPM, CENPN, CENPT and CENPU. The CENPA-NAC complex interacts with the CENPA-CAD complex, composed of CENPI, CENPK, CENPL, CENPO, CENPP, CENPQ, CENPR and CENPS. Interacts with MLF1. Phosphorylated by PLK1 at Thr-72, creating a self-tethering site that specifically interacts with the polo-box domain of PLK1.

It is found in the cytoplasm. The protein resides in the nucleus. The protein localises to the chromosome. It localises to the centromere. Its subcellular location is the kinetochore. Functionally, component of the CENPA-NAC (nucleosome-associated) complex, a complex that plays a central role in assembly of kinetochore proteins, mitotic progression and chromosome segregation. The CENPA-NAC complex recruits the CENPA-CAD (nucleosome distal) complex and may be involved in incorporation of newly synthesized CENPA into centromeres. Plays an important role in the correct PLK1 localization to the mitotic kinetochores. A scaffold protein responsible for the initial recruitment and maintenance of the kinetochore PLK1 population until its degradation. Involved in transcriptional repression. The protein is Centromere protein U (CENPU) of Bos taurus (Bovine).